The following is a 790-amino-acid chain: Serine/threonine-protein kinase DCLK3 (790 aa).

The tract at residues 1–37 is disordered; sequence MPAAPVLRPPPPPATPAPPAPSRPAPPIPGHRGPCDH. The span at 7–29 shows a compositional bias: pro residues; sequence LRPPPPPATPAPPAPSRPAPPIP. The region spanning 97–183 is the Doublecortin domain; it reads RVVTVVKLGG…KEPLTLKSIQ (87 aa). Over residues 201–218 the composition is skewed to low complexity; the sequence is HSRVPSPRLRSRLPSKLL. 2 disordered regions span residues 201-290 and 315-506; these read HSRV…SGEK and LQLG…KGII. Composition is skewed to basic and acidic residues over residues 332–345, 352–400, 425–434, and 457–496; these read DLGRAQKRDSEKLV, RPSE…ESQD, IDMRREDRHT, and TRGEEKQAEHEKKPGGLGERRAPEKESKRKLEEKRPERPS. The 258-residue stretch at 514 to 771 folds into the Protein kinase domain; that stretch reads YDIGGVIGDG…AEQVLQHPWI (258 aa). ATP is bound by residues 520-528 and Lys-543; that span reads IGDGNFATV. The active-site Proton acceptor is the Asp-635.

This sequence belongs to the protein kinase superfamily. CAMK Ser/Thr protein kinase family. CaMK subfamily. As to expression, highly expressed in brain and to a lower extent in liver and kidney.

The protein localises to the cytoplasm. The protein resides in the nucleus. It catalyses the reaction L-seryl-[protein] + ATP = O-phospho-L-seryl-[protein] + ADP + H(+). The enzyme catalyses L-threonyl-[protein] + ATP = O-phospho-L-threonyl-[protein] + ADP + H(+). In Mus musculus (Mouse), this protein is Serine/threonine-protein kinase DCLK3 (Dclk3).